Reading from the N-terminus, the 260-residue chain is uncharacterized protein (260 aa).

The 61-residue stretch at 7–67 (VPALTRAIDI…DHQENFCLWT (61 aa)) folds into the HTH iclR-type domain. The segment at residues 28–47 (AATIIDTLGIPKSTAYLLLN) is a DNA-binding region (H-T-H motif). The 170-residue stretch at 82-251 (LRELARPRLT…ARDISRLLGW (170 aa)) folds into the IclR-ED domain.

This is an uncharacterized protein from Escherichia coli (strain K12).